We begin with the raw amino-acid sequence, 853 residues long: uncharacterized protein (853 aa).

The span at M1 to K11 shows a compositional bias: basic residues. 3 disordered regions span residues M1–V448, I485–N621, and E635–E658. Over residues I20–G37 the composition is skewed to acidic residues. A compositionally biased stretch (basic residues) spans N42–K55. Over residues E60–E74 the composition is skewed to acidic residues. Over residues G75–K87 the composition is skewed to basic and acidic residues. Over residues K88–H107 the composition is skewed to basic residues. The segment covering E112–E121 has biased composition (acidic residues). Positions R124–N139 are enriched in basic residues. Composition is skewed to acidic residues over residues E143 to V166 and D179 to Q197. Basic residues predominate over residues D216–R228. Acidic residues-rich tracts occupy residues D232–N260 and K268–K286. 3 stretches are compositionally biased toward basic and acidic residues: residues Q287–Y361, S370–Y400, and R411–S425. Composition is skewed to low complexity over residues S426 to N447, N510 to S613, and N636 to K652.

This is an uncharacterized protein from Dictyostelium discoideum (Social amoeba).